Consider the following 161-residue polypeptide: MAEINSLTELSVVTNTAETHENIAPVHVQKLDSQGRAYATGKRKDAVARVWIKPGSGKITINNKEFDKYFARPVLRMILRQPIVATNRDTQFDIIATVAGGGLSGQAGAVRHGISKALTYYEPELRTILKKGGFLTRDSRVVERKKYGKAKARRSFQFSKR.

This sequence belongs to the universal ribosomal protein uS9 family.

The protein is Small ribosomal subunit protein uS9 of Bartonella henselae (strain ATCC 49882 / DSM 28221 / CCUG 30454 / Houston 1) (Rochalimaea henselae).